The primary structure comprises 445 residues: MDIRQVRETVEMIEEQHFDIRTITMGISLLDCVDSDIDRAAAKIYQKITTKAANLVAVGDDIAAELGIPIVNKRVSVTPIALIGAATDAEDYLPLAKALDQAACDIGVDFIGGFSALVQKGYQKGDKILIESIPQALAQTKKVCASVNVGSTRSGINMTAVADMGRIIKETAKASEMGAAKLVVFANAVEDNPFMAGAFHGVGEADTVINVGVSGPGVVKRALEKVRGESFDVLAETVKKTAFKITRIGQLVGQMASERLGVGFGVVDLSLAPTPAVGDSVARVLEEMGLEMVGTHGTTAALALLNDAVKKGGVMACNRVGGLSGAFIPVSEDEGMIAAVQGGSLNLEKLEAMTAICSVGLDMIAIPEETPSETIAAMIADEAAIGVINQKTTAVRIIPKGKEGDMIAFGGLLGTAPVMAVNPHSSADFIARGGQIPAPIHSFKN.

The protein belongs to the UPF0210 family. Homodimer.

The sequence is that of UPF0210 protein Sez_0396 from Streptococcus equi subsp. zooepidemicus (strain MGCS10565).